The primary structure comprises 27 residues: Cupiennin-4a (27 aa).

At E27 the chain carries Glutamic acid 1-amide.

Expressed by the venom gland.

It is found in the secreted. This chain is Cupiennin-4a, found in Cupiennius salei (American wandering spider).